A 201-amino-acid polypeptide reads, in one-letter code: Dephospho-CoA kinase (201 aa).

In terms of domain architecture, DPCK spans 4–201; that stretch reads SVGLTGNIAS…KYLREAKIKQ (198 aa). An ATP-binding site is contributed by 12–17; the sequence is ASGKST.

The protein belongs to the CoaE family.

Its subcellular location is the cytoplasm. The enzyme catalyses 3'-dephospho-CoA + ATP = ADP + CoA + H(+). It participates in cofactor biosynthesis; coenzyme A biosynthesis; CoA from (R)-pantothenate: step 5/5. Functionally, catalyzes the phosphorylation of the 3'-hydroxyl group of dephosphocoenzyme A to form coenzyme A. The protein is Dephospho-CoA kinase of Legionella pneumophila (strain Lens).